The chain runs to 238 residues: Ubiquinone biosynthesis O-methyltransferase (238 aa).

Residues Arg40, Gly59, Asp80, and Met124 each coordinate S-adenosyl-L-methionine.

The protein belongs to the methyltransferase superfamily. UbiG/COQ3 family.

It catalyses the reaction a 3-demethylubiquinol + S-adenosyl-L-methionine = a ubiquinol + S-adenosyl-L-homocysteine + H(+). The catalysed reaction is a 3-(all-trans-polyprenyl)benzene-1,2-diol + S-adenosyl-L-methionine = a 2-methoxy-6-(all-trans-polyprenyl)phenol + S-adenosyl-L-homocysteine + H(+). Its pathway is cofactor biosynthesis; ubiquinone biosynthesis. In terms of biological role, O-methyltransferase that catalyzes the 2 O-methylation steps in the ubiquinone biosynthetic pathway. This is Ubiquinone biosynthesis O-methyltransferase from Ralstonia nicotianae (strain ATCC BAA-1114 / GMI1000) (Ralstonia solanacearum).